The primary structure comprises 130 residues: Small ribosomal subunit protein bS16 (130 aa).

The interval 80 to 130 (AGHTPKKERANMKKAQPGKKAVERAEEKAAKASAAAEAPAEAPAAEAAAEE) is disordered. Positions 99-109 (KAVERAEEKAA) are enriched in basic and acidic residues. Low complexity predominate over residues 110-130 (KASAAAEAPAEAPAAEAAAEE).

The protein belongs to the bacterial ribosomal protein bS16 family.

This chain is Small ribosomal subunit protein bS16, found in Jannaschia sp. (strain CCS1).